We begin with the raw amino-acid sequence, 901 residues long: Dipeptidyl-aminopeptidase B (901 aa).

Positions M1–T22 are enriched in low complexity. A disordered region spans residues M1–Q67. Over M1 to R76 the chain is Cytoplasmic. The chain crosses the membrane as a helical; Signal-anchor for type II membrane protein span at residues L77–V97. Topologically, residues T98–N901 are vacuolar. N-linked (GlcNAc...) asparagine glycosylation is found at N334 and N625. Catalysis depends on S739, which acts as the Charge relay system. N793 is a glycosylation site (N-linked (GlcNAc...) asparagine). Active-site charge relay system residues include D816 and H849.

The protein belongs to the peptidase S9B family.

The protein localises to the vacuole membrane. The enzyme catalyses Release of an N-terminal dipeptide, Xaa-Yaa-|-Zaa-, from a polypeptide, preferentially when Yaa is Pro, provided Zaa is neither Pro nor hydroxyproline.. In terms of biological role, type IV dipeptidyl-peptidase which removes N-terminal dipeptides sequentially from polypeptides having unsubstituted N-termini provided that the penultimate residue is proline. This is Dipeptidyl-aminopeptidase B (dapB) from Aspergillus niger.